A 138-amino-acid polypeptide reads, in one-letter code: Large ribosomal subunit protein uL16 (138 aa).

Residues 1–14 (MLQPKRTKYRRTHR) are compositionally biased toward basic residues. The interval 1–24 (MLQPKRTKYRRTHRLQHDKGEAHT) is disordered. Residues 15-24 (LQHDKGEAHT) are compositionally biased toward basic and acidic residues.

It belongs to the universal ribosomal protein uL16 family. In terms of assembly, part of the 50S ribosomal subunit.

Functionally, binds 23S rRNA and is also seen to make contacts with the A and possibly P site tRNAs. The chain is Large ribosomal subunit protein uL16 from Mycoplasma mobile (strain ATCC 43663 / 163K / NCTC 11711) (Mesomycoplasma mobile).